The sequence spans 268 residues: Regulatory protein zeste (268 aa).

A DNA-binding region spans residues 1 to 72 (TAEEKEVLYT…WLNSRLRKQY (72 aa)). Over residues 94 to 108 (VSVASAVPQQQQQQH) the composition is skewed to low complexity. Positions 94 to 133 (VSVASAVPQQQQQQHHQQHDNVKEEPEYQISPDASEHNPQ) are disordered. The span at 110 to 119 (QQHDNVKEEP) shows a compositional bias: basic and acidic residues.

Self-associates forming complexes of several hundred monomers.

It is found in the nucleus. Involved in transvection phenomena (= synapsis-dependent gene expression), where the synaptic pairing of chromosomes carrying genes with which zeste interacts influences the expression of these genes. Zeste binds to DNA and stimulates transcription from a nearby promoter. The protein is Regulatory protein zeste (z) of Drosophila sechellia (Fruit fly).